The sequence spans 99 residues: Integration host factor subunit alpha (99 aa).

The interval phenylalanine 49–alanine 75 is disordered.

This sequence belongs to the bacterial histone-like protein family. As to quaternary structure, heterodimer of an alpha and a beta chain.

This protein is one of the two subunits of integration host factor, a specific DNA-binding protein that functions in genetic recombination as well as in transcriptional and translational control. The sequence is that of Integration host factor subunit alpha from Salmonella arizonae (strain ATCC BAA-731 / CDC346-86 / RSK2980).